The following is a 538-amino-acid chain: Phosphoenolpyruvate carboxykinase (ATP) (538 aa).

The substrate site is built by Arg-61, Tyr-195, and Lys-201. ATP is bound by residues Lys-201, His-220, and 236-244 (GLSGTGKTT). 2 residues coordinate Mn(2+): Lys-201 and His-220. Asp-257 provides a ligand contact to Mn(2+). Residues Glu-285, Arg-323, and Thr-449 each coordinate ATP. Residue Arg-323 participates in substrate binding.

This sequence belongs to the phosphoenolpyruvate carboxykinase (ATP) family. It depends on Mn(2+) as a cofactor.

It is found in the cytoplasm. The catalysed reaction is oxaloacetate + ATP = phosphoenolpyruvate + ADP + CO2. Its pathway is carbohydrate biosynthesis; gluconeogenesis. Involved in the gluconeogenesis. Catalyzes the conversion of oxaloacetate (OAA) to phosphoenolpyruvate (PEP) through direct phosphoryl transfer between the nucleoside triphosphate and OAA. This Afipia carboxidovorans (strain ATCC 49405 / DSM 1227 / KCTC 32145 / OM5) (Oligotropha carboxidovorans) protein is Phosphoenolpyruvate carboxykinase (ATP).